Consider the following 374-residue polypeptide: Homoserine O-acetyltransferase (374 aa).

Positions 45–353 (NAILVLHALT…PYGHDAFLIE (309 aa)) constitute an AB hydrolase-1 domain. Residue S151 is the Nucleophile of the active site. R220 is a binding site for substrate. Residues D314 and H347 contribute to the active site. Substrate is bound at residue D348.

The protein belongs to the AB hydrolase superfamily. MetX family. As to quaternary structure, homodimer.

Its subcellular location is the cytoplasm. It carries out the reaction L-homoserine + acetyl-CoA = O-acetyl-L-homoserine + CoA. It functions in the pathway amino-acid biosynthesis; L-methionine biosynthesis via de novo pathway; O-acetyl-L-homoserine from L-homoserine: step 1/1. Its function is as follows. Transfers an acetyl group from acetyl-CoA to L-homoserine, forming acetyl-L-homoserine. The protein is Homoserine O-acetyltransferase of Moorella thermoacetica (strain ATCC 39073 / JCM 9320).